Here is a 589-residue protein sequence, read N- to C-terminus: Complement component C8 beta chain (589 aa).

A signal peptide spans 1–31 (MKIGAQVWRALAKSCLLCATLGCLHFPGSRG). Residues 32–53 (GKPDFFETKAVNGSLVKSRPVR) constitute a propeptide that is removed on maturation. A glycan (N-linked (GlcNAc...) asparagine) is linked at Asn-43. The 54-residue stretch at 63–116 (DCELSTWSSWTACDPCQKKRYRHTYLLRPSQFYGELCDLSDKEVEDCVTNQPCR) folds into the TSP type-1 1 domain. 7 cysteine pairs are disulfide-bonded: Cys-64/Cys-99, Cys-75/Cys-109, Cys-78/Cys-115, Cys-121/Cys-132, Cys-126/Cys-145, Cys-139/Cys-154, and Cys-161/Cys-199. 2 C-linked (Man) tryptophan glycosylation sites follow: Trp-69 and Trp-72. The region spanning 120-155 (RCEGFVCAQTGRCVNRRLLCNGDNDCGDQSDEANCR) is the LDL-receptor class A domain. Ca(2+)-binding residues include Leu-137, Asn-140, Asp-142, Asp-144, Asp-150, and Glu-151. An MACPF domain is found at 157–503 (IYKNCQREME…EFQSEVSSCR (347 aa)). 8 consecutive transmembrane segments (beta stranded) span residues 201 to 206 (PHYILD), 209 to 213 (FRKPY), 251 to 258 (FNFTSGFK), 261 to 268 (GVMDLGIK), 328 to 335 (SYGEYRDL), 338 to 343 (DFGTHF), 378 to 385 (AGGSFGIG), and 391 to 398 (VYVKVGVS). Cys-377 and Cys-402 are disulfide-bonded. Positions 404–534 (DIMKEINERN…PGGFQGTACE (131 aa)) constitute an EGF-like domain. Phosphothreonine is present on Thr-417. Intrachain disulfides connect Cys-502-Cys-549, Cys-504-Cys-520, Cys-507-Cys-522, and Cys-524-Cys-533. The TSP type-1 2 domain maps to 544-587 (DGKWSCWSDWSACSGGHKTRHRQCNNPAPHKGGSPCSGPASETL). Residues Trp-550 and Trp-553 are each glycosylated (C-linked (Man) tryptophan). An intrachain disulfide couples Cys-556 to Cys-589. The tract at residues 570–589 (PAPHKGGSPCSGPASETLNC) is disordered.

The protein belongs to the complement C6/C7/C8/C9 family. In terms of assembly, heterotrimer of 3 chains: alpha (C8A), beta (C8B) and gamma (C8G); the alpha and gamma chains are disulfide bonded. Component of the membrane attack complex (MAC), composed of complement C5b, C6, C7, C8A, C8B, C8G and multiple copies of the pore-forming subunit C9. In terms of processing, N-glycosylated; contains one or two bound glycans. Not O-glycosylated.

The protein localises to the secreted. The protein resides in the target cell membrane. With respect to regulation, membrane attack complex (MAC) assembly is inhibited by CD59, thereby protecting self-cells from damage during complement activation. CD59 acts by binding to the beta-haipins of C8 (C8A and C8B), forming an intermolecular beta-sheet that prevents incorporation of the multiple copies of C9 required for complete formation of the osmolytic pore. MAC assembly is also inhibited by clusterin (CLU) chaperones that inhibit polymerization of C9. Functionally, component of the membrane attack complex (MAC), a multiprotein complex activated by the complement cascade, which inserts into a target cell membrane and forms a pore, leading to target cell membrane rupture and cell lysis. The MAC is initiated by proteolytic cleavage of C5 into complement C5b in response to the classical, alternative, lectin and GZMK complement pathways. The complement pathways consist in a cascade of proteins that leads to phagocytosis and breakdown of pathogens and signaling that strengthens the adaptive immune system. C8B, together with C8A and C8G, inserts into the target membrane, but does not form pores by itself. During MAC assembly, associates with C5b, C6 and C7 to form the C5b8 intermediate complex that inserts into the target membrane and traverses the bilayer increasing membrane rigidity. The chain is Complement component C8 beta chain (C8b) from Mus musculus (Mouse).